The primary structure comprises 163 residues: NADH-quinone oxidoreductase subunit I (163 aa).

4Fe-4S ferredoxin-type domains are found at residues 53-83 (LRRY…IEAG) and 94-123 (TLYE…ETRE). [4Fe-4S] cluster is bound by residues Cys-63, Cys-66, Cys-69, Cys-73, Cys-103, Cys-106, Cys-109, and Cys-113.

The protein belongs to the complex I 23 kDa subunit family. As to quaternary structure, NDH-1 is composed of 14 different subunits. Subunits NuoA, H, J, K, L, M, N constitute the membrane sector of the complex. Requires [4Fe-4S] cluster as cofactor.

It is found in the cell inner membrane. The catalysed reaction is a quinone + NADH + 5 H(+)(in) = a quinol + NAD(+) + 4 H(+)(out). NDH-1 shuttles electrons from NADH, via FMN and iron-sulfur (Fe-S) centers, to quinones in the respiratory chain. The immediate electron acceptor for the enzyme in this species is believed to be ubiquinone. Couples the redox reaction to proton translocation (for every two electrons transferred, four hydrogen ions are translocated across the cytoplasmic membrane), and thus conserves the redox energy in a proton gradient. The sequence is that of NADH-quinone oxidoreductase subunit I from Alkalilimnicola ehrlichii (strain ATCC BAA-1101 / DSM 17681 / MLHE-1).